The chain runs to 305 residues: Auxin-responsive protein IAA27 (305 aa).

An EAR-like (transcriptional repression) motif is present at residues 45-49; it reads LRLGL. Disordered stretches follow at residues 96 to 119 and 155 to 180; these read TTAT…GKST and KNSM…AKSG. Positions 155–170 are enriched in polar residues; sequence KNSMASSQSQKPGNNS. The PB1 domain maps to 185 to 287; sequence CLYVKVSMEG…SCKKLRIMKS (103 aa).

The protein belongs to the Aux/IAA family. As to quaternary structure, homodimers and heterodimers. Interacts with phytochrome A. Interacts with TPL.

It localises to the nucleus. Functionally, aux/IAA proteins are short-lived transcriptional factors that function as repressors of early auxin response genes at low auxin concentrations. Repression is thought to result from the interaction with auxin response factors (ARFs), proteins that bind to the auxin-responsive promoter element (AuxRE). Formation of heterodimers with ARF proteins may alter their ability to modulate early auxin response genes expression. This Arabidopsis thaliana (Mouse-ear cress) protein is Auxin-responsive protein IAA27 (IAA27).